The primary structure comprises 142 residues: Nucleoside diphosphate kinase (142 aa).

Residues Lys11, Phe59, Arg87, Thr93, Arg104, and Asn114 each contribute to the ATP site. His117 (pros-phosphohistidine intermediate) is an active-site residue.

It belongs to the NDK family. In terms of assembly, homotetramer. Requires Mg(2+) as cofactor.

It is found in the cytoplasm. The catalysed reaction is a 2'-deoxyribonucleoside 5'-diphosphate + ATP = a 2'-deoxyribonucleoside 5'-triphosphate + ADP. The enzyme catalyses a ribonucleoside 5'-diphosphate + ATP = a ribonucleoside 5'-triphosphate + ADP. Functionally, major role in the synthesis of nucleoside triphosphates other than ATP. The ATP gamma phosphate is transferred to the NDP beta phosphate via a ping-pong mechanism, using a phosphorylated active-site intermediate. In Wigglesworthia glossinidia brevipalpis, this protein is Nucleoside diphosphate kinase.